The sequence spans 318 residues: Transaldolase (318 aa).

Catalysis depends on lysine 132, which acts as the Schiff-base intermediate with substrate.

This sequence belongs to the transaldolase family. Type 1 subfamily. Homodimer.

It is found in the cytoplasm. The catalysed reaction is D-sedoheptulose 7-phosphate + D-glyceraldehyde 3-phosphate = D-erythrose 4-phosphate + beta-D-fructose 6-phosphate. Its pathway is carbohydrate degradation; pentose phosphate pathway; D-glyceraldehyde 3-phosphate and beta-D-fructose 6-phosphate from D-ribose 5-phosphate and D-xylulose 5-phosphate (non-oxidative stage): step 2/3. Transaldolase is important for the balance of metabolites in the pentose-phosphate pathway. This is Transaldolase from Shewanella baltica (strain OS155 / ATCC BAA-1091).